Here is a 134-residue protein sequence, read N- to C-terminus: Fluoride-specific ion channel FluC 3 (134 aa).

The next 4 helical transmembrane spans lie at 4–24 (LIILVFVGGAFGAMCREFIML), 35–55 (MDIFVANIIAAFLLGLTTSFF), 67–87 (MVGTGIMGGLSTFSSFVFGAV), and 100–120 (ICYLVASLIVGFIAVELGLMI). The Na(+) site is built by Gly-74 and Ser-77.

The protein belongs to the fluoride channel Fluc/FEX (TC 1.A.43) family.

Its subcellular location is the cell inner membrane. The catalysed reaction is fluoride(in) = fluoride(out). Its activity is regulated as follows. Na(+) is not transported, but it plays an essential structural role and its presence is essential for fluoride channel function. Functionally, fluoride-specific ion channel. Important for reducing fluoride concentration in the cell, thus reducing its toxicity. The protein is Fluoride-specific ion channel FluC 3 of Yersinia pseudotuberculosis serotype I (strain IP32953).